The primary structure comprises 173 residues: Signal peptidase complex catalytic subunit sec11 (173 aa).

Over 1–15 the chain is Cytoplasmic; that stretch reads MLGIADMQPRQLAAQ. The helical; Signal-anchor for type II membrane protein transmembrane segment at 16–36 threads the bilayer; the sequence is ILNFALVLSTAFMMWKGLSVV. Residues 37-173 lie on the Lumenal side of the membrane; that stretch reads SDSPSPIVVV…MGVMVVLQRE (137 aa). Catalysis depends on charge relay system residues Ser-50, His-89, and Asp-115. The tract at residues 159–170 is C-terminal short (CTS) helix; sequence VMLGLMGVMVVL.

It belongs to the peptidase S26B family. As to quaternary structure, component of the signal peptidase complex (SPC) composed of a catalytic subunit SEC11 and three accessory subunits SPC1, SPC2 and SPC3. The complex induces a local thinning of the ER membrane which is used to measure the length of the signal peptide (SP) h-region of protein substrates. This ensures the selectivity of the complex towards h-regions shorter than 18-20 amino acids. SPC associates with the translocon complex.

The protein resides in the endoplasmic reticulum membrane. It carries out the reaction Cleavage of hydrophobic, N-terminal signal or leader sequences from secreted and periplasmic proteins.. Functionally, catalytic component of the signal peptidase complex (SPC) which catalyzes the cleavage of N-terminal signal sequences from nascent proteins as they are translocated into the lumen of the endoplasmic reticulum. Specifically cleaves N-terminal signal peptides that contain a hydrophobic alpha-helix (h-region) shorter than 18-20 amino acids. The sequence is that of Signal peptidase complex catalytic subunit sec11 (sec11) from Pyrenophora tritici-repentis (strain Pt-1C-BFP) (Wheat tan spot fungus).